The sequence spans 415 residues: Acetate kinase (415 aa).

Asn-8 lines the Mg(2+) pocket. Lys-15 is a binding site for ATP. Residue Arg-106 participates in substrate binding. Asp-163 functions as the Proton donor/acceptor in the catalytic mechanism. ATP-binding positions include 222–226 (HLGNG), 296–298 (DLR), and 344–348 (GIGEN). Position 397 (Glu-397) interacts with Mg(2+).

It belongs to the acetokinase family. Homodimer. Mg(2+) serves as cofactor. It depends on Mn(2+) as a cofactor.

It localises to the cytoplasm. The enzyme catalyses acetate + ATP = acetyl phosphate + ADP. It participates in metabolic intermediate biosynthesis; acetyl-CoA biosynthesis; acetyl-CoA from acetate: step 1/2. Catalyzes the formation of acetyl phosphate from acetate and ATP. Can also catalyze the reverse reaction. The polypeptide is Acetate kinase (Thermosynechococcus vestitus (strain NIES-2133 / IAM M-273 / BP-1)).